The following is a 997-amino-acid chain: Translation initiation factor IF-2 (997 aa).

The tract at residues Ser36 to Arg415 is disordered. Composition is skewed to basic and acidic residues over residues Glu45–Gly65 and Ala94–Ala107. Low complexity predominate over residues Ala108–Pro126. A compositionally biased stretch (basic and acidic residues) spans His127–Lys147. Over residues Ala151–Arg162 the composition is skewed to low complexity. A compositionally biased stretch (basic and acidic residues) spans Pro163–Pro181. The segment covering Val182–Glu196 has biased composition (low complexity). Basic and acidic residues-rich tracts occupy residues Ala197 to Ala214 and Pro241 to Asp252. Over residues Gly300–Arg309 the composition is skewed to gly residues. Over residues Pro316–Gly335 the composition is skewed to pro residues. Over residues Gly378–Arg388 the composition is skewed to basic and acidic residues. Residues Asn390–Gly399 show a composition bias toward basic residues. The 170-residue stretch at Pro496–Lys665 folds into the tr-type G domain. The segment at Gly505–Thr512 is G1. Gly505–Thr512 lines the GTP pocket. Residues Gly530–His534 form a G2 region. The segment at Asp551–Gly554 is G3. GTP-binding positions include Asp551–His555 and Asn605–Asp608. Residues Asn605–Asp608 are G4. The G5 stretch occupies residues Ala641 to Lys643.

Belongs to the TRAFAC class translation factor GTPase superfamily. Classic translation factor GTPase family. IF-2 subfamily.

It is found in the cytoplasm. Functionally, one of the essential components for the initiation of protein synthesis. Protects formylmethionyl-tRNA from spontaneous hydrolysis and promotes its binding to the 30S ribosomal subunits. Also involved in the hydrolysis of GTP during the formation of the 70S ribosomal complex. This is Translation initiation factor IF-2 from Desulfovibrio desulfuricans (strain ATCC 27774 / DSM 6949 / MB).